Here is a 275-residue protein sequence, read N- to C-terminus: 3-methyl-2-oxobutanoate hydroxymethyltransferase (275 aa).

Mg(2+) contacts are provided by Asp-44 and Asp-83. 3-methyl-2-oxobutanoate is bound by residues Asp-44–Ser-45, Asp-83, and Lys-113. Glu-115 is a binding site for Mg(2+). Glu-182 acts as the Proton acceptor in catalysis.

The protein belongs to the PanB family. In terms of assembly, homodecamer; pentamer of dimers. Mg(2+) serves as cofactor.

Its subcellular location is the cytoplasm. The catalysed reaction is 3-methyl-2-oxobutanoate + (6R)-5,10-methylene-5,6,7,8-tetrahydrofolate + H2O = 2-dehydropantoate + (6S)-5,6,7,8-tetrahydrofolate. It functions in the pathway cofactor biosynthesis; (R)-pantothenate biosynthesis; (R)-pantoate from 3-methyl-2-oxobutanoate: step 1/2. Functionally, catalyzes the reversible reaction in which hydroxymethyl group from 5,10-methylenetetrahydrofolate is transferred onto alpha-ketoisovalerate to form ketopantoate. This Clostridium botulinum (strain Kyoto / Type A2) protein is 3-methyl-2-oxobutanoate hydroxymethyltransferase.